The following is a 314-amino-acid chain: Mycothiol acetyltransferase (314 aa).

E39 contacts 1D-myo-inositol 2-(L-cysteinylamino)-2-deoxy-alpha-D-glucopyranoside. L80–A82 provides a ligand contact to acetyl-CoA. Positions F159–P313 constitute an N-acetyltransferase domain. The 1D-myo-inositol 2-(L-cysteinylamino)-2-deoxy-alpha-D-glucopyranoside site is built by E186, K228, and E237. Residues L241–V243 and Q248–R254 each bind acetyl-CoA. Y275 contributes to the 1D-myo-inositol 2-(L-cysteinylamino)-2-deoxy-alpha-D-glucopyranoside binding site.

It belongs to the acetyltransferase family. MshD subfamily. As to quaternary structure, monomer.

It carries out the reaction 1D-myo-inositol 2-(L-cysteinylamino)-2-deoxy-alpha-D-glucopyranoside + acetyl-CoA = mycothiol + CoA + H(+). Catalyzes the transfer of acetyl from acetyl-CoA to desacetylmycothiol (Cys-GlcN-Ins) to form mycothiol. The polypeptide is Mycothiol acetyltransferase (Jonesia denitrificans (strain ATCC 14870 / DSM 20603 / BCRC 15368 / CIP 55.134 / JCM 11481 / NBRC 15587 / NCTC 10816 / Prevot 55134) (Listeria denitrificans)).